A 134-amino-acid chain; its full sequence is UPF0412 protein YaaI (134 aa).

A signal peptide spans 1 to 23 (MKSVITISASLAISLMLCCTAQA).

It belongs to the UPF0412 family.

The chain is UPF0412 protein YaaI from Escherichia coli O127:H6 (strain E2348/69 / EPEC).